Here is a 160-residue protein sequence, read N- to C-terminus: Transcription elongation factor GreA (160 aa).

Residues 43 to 75 (LSENAEYEAAREQQAQMESKIVDLENKLTRASI) adopt a coiled-coil conformation.

This sequence belongs to the GreA/GreB family.

In terms of biological role, necessary for efficient RNA polymerase transcription elongation past template-encoded arresting sites. The arresting sites in DNA have the property of trapping a certain fraction of elongating RNA polymerases that pass through, resulting in locked ternary complexes. Cleavage of the nascent transcript by cleavage factors such as GreA or GreB allows the resumption of elongation from the new 3'terminus. GreA releases sequences of 2 to 3 nucleotides. The sequence is that of Transcription elongation factor GreA from Prosthecochloris aestuarii (strain DSM 271 / SK 413).